Reading from the N-terminus, the 386-residue chain is AT-hook motif nuclear-localized protein 8 (386 aa).

2 disordered regions span residues 1-175 (MDSR…LGGT) and 303-372 (KQSS…LHPH). The span at 54–70 (QQQSQTFHQQQQQQMDQ) shows a compositional bias: low complexity. Residues 101–110 (VKKKRGRPRK) are compositionally biased toward basic residues. The Bipartite nuclear localization signal signature appears at 102-110 (KKKRGRPRK). Residues 102-114 (KKKRGRPRKYTPD) constitute a DNA-binding region (a.T hook 1). Residues 126–135 (PLLSAASNSY) are compositionally biased toward polar residues. A compositionally biased stretch (gly residues) spans 136-147 (GEGGVGDSGGNG). Residues 155–167 (KRNRGRPPGSSKK) constitute a DNA-binding region (a.T hook 2). The PPC domain maps to 174-316 (GTSGVGFTPH…VNIARGQNPE (143 aa)). Composition is skewed to low complexity over residues 328-337 (GSVSQGPSSE) and 361-372 (QQQQQQQPLHPH).

The protein localises to the nucleus. In terms of biological role, transcription factor that specifically binds AT-rich DNA sequences related to the nuclear matrix attachment regions (MARs). This chain is AT-hook motif nuclear-localized protein 8, found in Arabidopsis thaliana (Mouse-ear cress).